The following is a 725-amino-acid chain: Lipoamidase (725 aa).

A disordered region spans residues 1–52 (MLAQESILETTVQTETESVTTETSQTVANLESETTSQTVMQEKESSSAIAES). A compositionally biased stretch (low complexity) spans 9–27 (ETTVQTETESVTTETSQTV). The span at 28–40 (ANLESETTSQTVM) shows a compositional bias: polar residues. Active-site charge relay system residues include Lys159 and Ser235. Ser259 functions as the Acyl-ester intermediate in the catalytic mechanism. Residues 551-686 (KINQPHVEEP…NKSMIGKQEQ (136 aa)) form a disordered region. Residues 556–637 (HVEEPDKDKE…TSEGPIEGKD (82 aa)) show a composition bias toward basic and acidic residues. Over residues 650 to 661 (SGSSLDNSLNSS) the composition is skewed to low complexity. Polar residues predominate over residues 662 to 679 (ANQGTKSTESTHAFSNKS). Residues 700-720 (PSTFWIVLGGAFLVTSGTIYI) traverse the membrane as a helical segment.

This sequence belongs to the amidase family. Homodimer in solution.

It localises to the cell membrane. The enzyme catalyses N(6)-[(R)-lipoyl]-L-lysyl-[lipoyl-carrier protein] + H2O = L-lysyl-[lipoyl-carrier protein] + (R)-lipoate. Lipoamidase activity is slightly inhibited by p-chloromercuribenzoate. Its function is as follows. Amidohydrolase that releases lipoic acid from the protein-bound form. Cleaves the amide bond that links lipoic acid to the lipoylated lysine epsilon-amino groups, leading to the formation of free lipoic acid plus the unmodified protein. Shows activity toward both high molecular weight protein substrates such as a lipoyl domain and intact 2-oxoacid dehydrogenases as well as small molecule substrates such as lipoyl-lysine. Also acts on small biotinylated substrates. Hydrolyzes the synthetic substrates methyl lipoate and lipoamide. The physiologically important substrates are probably lipoyl-lysine and small peptides containing lipoyl-lysine. Lpa seems likely to enable this bacterium to utilize amide-linked forms of lipoic acid that otherwise could not be assimilated. This Enterococcus faecalis (Streptococcus faecalis) protein is Lipoamidase.